The following is a 947-amino-acid chain: Protein translocase subunit SecA (947 aa).

Residues Q85, 103 to 107, and D514 contribute to the ATP site; that span reads GEGKT. The interval 864 to 947 is disordered; the sequence is AAPSLDKGAQ…QAKGGRRRKK (84 aa). Residues 884–900 are compositionally biased toward basic and acidic residues; it reads PEIRAKGLDAPQRRDLH. Over residues 934-947 the composition is skewed to basic residues; it reads ERRKQAKGGRRRKK.

Belongs to the SecA family. In terms of assembly, monomer and homodimer. Part of the essential Sec protein translocation apparatus which comprises SecA, SecYEG and auxiliary proteins SecDF. Other proteins may also be involved.

Its subcellular location is the cell membrane. It is found in the cytoplasm. It catalyses the reaction ATP + H2O + cellular proteinSide 1 = ADP + phosphate + cellular proteinSide 2.. Part of the Sec protein translocase complex. Interacts with the SecYEG preprotein conducting channel. Has a central role in coupling the hydrolysis of ATP to the transfer of proteins into and across the cell membrane, serving as an ATP-driven molecular motor driving the stepwise translocation of polypeptide chains across the membrane. The chain is Protein translocase subunit SecA from Streptomyces lividans.